The following is a 394-amino-acid chain: Mitogen-activated protein kinase 2 (394 aa).

A compositionally biased stretch (gly residues) spans 1-31 (MRMEGGGGGGHGHHGGGGGGHGHHGGIGGGE). Residues 1 to 33 (MRMEGGGGGGHGHHGGGGGGHGHHGGIGGGEAQ) are disordered. In terms of domain architecture, Protein kinase spans 61-347 (VPPIRPVGRG…VDEALCHPYL (287 aa)). Residues 67–75 (VGRGACGII) and K90 contribute to the ATP site. D187 serves as the catalytic Proton acceptor. Y221 is subject to Phosphotyrosine.

Belongs to the protein kinase superfamily. CMGC Ser/Thr protein kinase family. MAP kinase subfamily. In terms of processing, the phosphorylation on Tyr-221 activates the enzyme. A conserved Thr, which must also be phosphorylated to activate the enzyme in closely related sequences, is replaced by Met-219 in this sequence.

It carries out the reaction L-seryl-[protein] + ATP = O-phospho-L-seryl-[protein] + ADP + H(+). It catalyses the reaction L-threonyl-[protein] + ATP = O-phospho-L-threonyl-[protein] + ADP + H(+). The protein is Mitogen-activated protein kinase 2 (MPK2) of Oryza sativa subsp. japonica (Rice).